The chain runs to 503 residues: Arabinose import ATP-binding protein AraG 1 (503 aa).

2 consecutive ABC transporter domains span residues Leu5 to Arg240 and Arg251 to Thr497. Gly37–Ser44 contributes to the ATP binding site.

This sequence belongs to the ABC transporter superfamily. Arabinose importer (TC 3.A.1.2.2) family. As to quaternary structure, the complex is composed of two ATP-binding proteins (AraG), two transmembrane proteins (AraH) and a solute-binding protein (AraF).

Its subcellular location is the cell inner membrane. It catalyses the reaction L-arabinose(out) + ATP + H2O = L-arabinose(in) + ADP + phosphate + H(+). In terms of biological role, part of the ABC transporter complex AraFGH involved in arabinose import. Responsible for energy coupling to the transport system. The chain is Arabinose import ATP-binding protein AraG 1 from Burkholderia ambifaria (strain ATCC BAA-244 / DSM 16087 / CCUG 44356 / LMG 19182 / AMMD) (Burkholderia cepacia (strain AMMD)).